We begin with the raw amino-acid sequence, 172 residues long: Adenine phosphoribosyltransferase (172 aa).

It belongs to the purine/pyrimidine phosphoribosyltransferase family. In terms of assembly, homodimer.

Its subcellular location is the cytoplasm. The enzyme catalyses AMP + diphosphate = 5-phospho-alpha-D-ribose 1-diphosphate + adenine. Its pathway is purine metabolism; AMP biosynthesis via salvage pathway; AMP from adenine: step 1/1. Its function is as follows. Catalyzes a salvage reaction resulting in the formation of AMP, that is energically less costly than de novo synthesis. This Streptococcus uberis (strain ATCC BAA-854 / 0140J) protein is Adenine phosphoribosyltransferase.